The primary structure comprises 370 residues: Cytochrome b (370 aa).

4 helical membrane-spanning segments follow: residues 30 to 50 (FGSM…FLAF), 74 to 96 (WVFR…LHIF), 109 to 129 (VWMS…MGYV), and 175 to 195 (FFVL…GHLI). His-80 and His-94 together coordinate heme b. 2 residues coordinate heme b: His-179 and His-193. His-198 contacts a ubiquinone. 4 consecutive transmembrane segments (helical) span residues 221 to 240 (YLGK…VLSL), 284 to 304 (VLGV…ALVN), 316 to 336 (FLVF…QCTV), and 342 to 362 (ILSP…LFIF).

This sequence belongs to the cytochrome b family. The main subunits of complex b-c1 are: cytochrome b, cytochrome c1 and the Rieske protein. Heme b is required as a cofactor.

It is found in the mitochondrion inner membrane. Functionally, component of the ubiquinol-cytochrome c reductase complex (complex III or cytochrome b-c1 complex) that is part of the mitochondrial respiratory chain. The b-c1 complex mediates electron transfer from ubiquinol to cytochrome c. Contributes to the generation of a proton gradient across the mitochondrial membrane that is then used for ATP synthesis. The sequence is that of Cytochrome b from Caenorhabditis elegans.